Reading from the N-terminus, the 298-residue chain is Probable pyridoxal 5'-phosphate synthase subunit SNZ2 (298 aa).

Asp-21 contacts D-ribose 5-phosphate. Lys-78 (schiff-base intermediate with D-ribose 5-phosphate) is an active-site residue. D-ribose 5-phosphate contacts are provided by residues Gly-150, Gly-213, and 234–235 (GS).

Belongs to the PdxS/SNZ family. As to quaternary structure, homohexamer. Interacts with THI11.

It carries out the reaction aldehydo-D-ribose 5-phosphate + D-glyceraldehyde 3-phosphate + L-glutamine = pyridoxal 5'-phosphate + L-glutamate + phosphate + 3 H2O + H(+). The protein operates within cofactor biosynthesis; pyridoxal 5'-phosphate biosynthesis. Functionally, catalyzes the formation of pyridoxal 5'-phosphate from ribose 5-phosphate (RBP), glyceraldehyde 3-phosphate (G3P) and ammonia. The ammonia is provided by a SNO isoform. Can also use ribulose 5-phosphate and dihydroxyacetone phosphate as substrates, resulting from enzyme-catalyzed isomerization of RBP and G3P, respectively. This Saccharomyces cerevisiae (strain ATCC 204508 / S288c) (Baker's yeast) protein is Probable pyridoxal 5'-phosphate synthase subunit SNZ2 (SNZ2).